Here is a 25-residue protein sequence, read N- to C-terminus: ATP synthase subunit alpha, mitochondrial (25 aa).

This sequence belongs to the ATPase alpha/beta chains family. In terms of assembly, F-type ATPases have 2 components, CF(1) - the catalytic core - and CF(0) - the membrane proton channel. CF(1) has five subunits: alpha(3), beta(3), gamma(1), delta(1), epsilon(1). CF(0) has three main subunits: a, b and c.

Its subcellular location is the mitochondrion. It localises to the mitochondrion inner membrane. Its function is as follows. Mitochondrial membrane ATP synthase (F(1)F(0) ATP synthase or Complex V) produces ATP from ADP in the presence of a proton gradient across the membrane which is generated by electron transport complexes of the respiratory chain. F-type ATPases consist of two structural domains, F(1) - containing the extramembraneous catalytic core, and F(0) - containing the membrane proton channel, linked together by a central stalk and a peripheral stalk. During catalysis, ATP synthesis in the catalytic domain of F(1) is coupled via a rotary mechanism of the central stalk subunits to proton translocation. Subunits alpha and beta form the catalytic core in F(1). Rotation of the central stalk against the surrounding alpha(3)beta(3) subunits leads to hydrolysis of ATP in three separate catalytic sites on the beta subunits. Subunit alpha does not bear the catalytic high-affinity ATP-binding sites. The sequence is that of ATP synthase subunit alpha, mitochondrial (ATPA) from Spinacia oleracea (Spinach).